Consider the following 100-residue polypeptide: Aspartyl/glutamyl-tRNA(Asn/Gln) amidotransferase subunit C (100 aa).

The protein belongs to the GatC family. Heterotrimer of A, B and C subunits.

The enzyme catalyses L-glutamyl-tRNA(Gln) + L-glutamine + ATP + H2O = L-glutaminyl-tRNA(Gln) + L-glutamate + ADP + phosphate + H(+). It carries out the reaction L-aspartyl-tRNA(Asn) + L-glutamine + ATP + H2O = L-asparaginyl-tRNA(Asn) + L-glutamate + ADP + phosphate + 2 H(+). Its function is as follows. Allows the formation of correctly charged Asn-tRNA(Asn) or Gln-tRNA(Gln) through the transamidation of misacylated Asp-tRNA(Asn) or Glu-tRNA(Gln) in organisms which lack either or both of asparaginyl-tRNA or glutaminyl-tRNA synthetases. The reaction takes place in the presence of glutamine and ATP through an activated phospho-Asp-tRNA(Asn) or phospho-Glu-tRNA(Gln). This is Aspartyl/glutamyl-tRNA(Asn/Gln) amidotransferase subunit C from Petrotoga mobilis (strain DSM 10674 / SJ95).